We begin with the raw amino-acid sequence, 89 residues long: Small ribosomal subunit protein uS14A (89 aa).

It belongs to the universal ribosomal protein uS14 family. Part of the 30S ribosomal subunit. Contacts proteins S3 and S10.

Functionally, binds 16S rRNA, required for the assembly of 30S particles and may also be responsible for determining the conformation of the 16S rRNA at the A site. The protein is Small ribosomal subunit protein uS14A of Pediococcus pentosaceus (strain ATCC 25745 / CCUG 21536 / LMG 10740 / 183-1w).